A 440-amino-acid polypeptide reads, in one-letter code: NK1 transcription factor-related protein 1 (440 aa).

A compositionally biased stretch (low complexity) spans 1–13 (MSTSGPAAPGDVP). Disordered stretches follow at residues 1 to 82 (MSTS…RPTS), 145 to 291 (GVAA…PRRA), and 342 to 387 (KWKK…PMGA). Residues 14-31 (ALPPPPPGPGSGPAPPAP) show a composition bias toward pro residues. 2 stretches are compositionally biased toward low complexity: residues 62-74 (VPAVPEGAGAARP) and 145-158 (GVAAAAGAEPTSAG). Over residues 170–181 (GYSSGSGRSPTA) the composition is skewed to polar residues. Residues 182-198 (DSEDEAPEDEDEEEAPE) are compositionally biased toward acidic residues. Positions 210-222 (GGSGGLGARGSGC) are enriched in gly residues. Low complexity predominate over residues 237–269 (AAPGPRGNSPGAPGPPATATGAGSAGSTPQGAA). The segment at residues 288–347 (PRRARTAFTYEQLVALENKFKATRYLSVCERLNLALSLSLTETQVKIWFQNRRTKWKKQN) is a DNA-binding region (homeobox). A compositionally biased stretch (gly residues) spans 356–374 (TGGGGGPGPGAGPGAGLPG).

This sequence belongs to the NK-1 homeobox family.

It is found in the nucleus. Functionally, may be required for the coordinated crosstalk of factors involved in the maintenance of energy homeostasis, possibly by regulating the transcription of specific factors involved in energy balance. In Mus musculus (Mouse), this protein is NK1 transcription factor-related protein 1.